A 129-amino-acid polypeptide reads, in one-letter code: Glycine cleavage system H protein (129 aa).

Residues 24 to 106 (LVRVGLSAYA…HGEGWLLVIR (83 aa)) enclose the Lipoyl-binding domain. Lys65 bears the N6-lipoyllysine mark.

Belongs to the GcvH family. The glycine cleavage system is composed of four proteins: P, T, L and H. Requires (R)-lipoate as cofactor.

The glycine cleavage system catalyzes the degradation of glycine. The H protein shuttles the methylamine group of glycine from the P protein to the T protein. This chain is Glycine cleavage system H protein, found in Synechococcus sp. (strain CC9311).